Here is a 427-residue protein sequence, read N- to C-terminus: UDP-N-acetylglucosamine 1-carboxyvinyltransferase 1 (427 aa).

Position 23 to 24 (Lys23 to Asn24) interacts with phosphoenolpyruvate. Arg96 serves as a coordination point for UDP-N-acetyl-alpha-D-glucosamine. Catalysis depends on Cys120, which acts as the Proton donor. 2-(S-cysteinyl)pyruvic acid O-phosphothioketal is present on Cys120. Residues Arg125–Leu129, Asp309, and Val331 each bind UDP-N-acetyl-alpha-D-glucosamine.

The protein belongs to the EPSP synthase family. MurA subfamily.

Its subcellular location is the cytoplasm. The catalysed reaction is phosphoenolpyruvate + UDP-N-acetyl-alpha-D-glucosamine = UDP-N-acetyl-3-O-(1-carboxyvinyl)-alpha-D-glucosamine + phosphate. It functions in the pathway cell wall biogenesis; peptidoglycan biosynthesis. Cell wall formation. Adds enolpyruvyl to UDP-N-acetylglucosamine. This Streptococcus pneumoniae (strain ATCC BAA-255 / R6) protein is UDP-N-acetylglucosamine 1-carboxyvinyltransferase 1.